A 318-amino-acid chain; its full sequence is Methionyl-tRNA formyltransferase (318 aa).

Residue 112–115 (SILP) participates in (6S)-5,6,7,8-tetrahydrofolate binding.

This sequence belongs to the Fmt family.

The enzyme catalyses L-methionyl-tRNA(fMet) + (6R)-10-formyltetrahydrofolate = N-formyl-L-methionyl-tRNA(fMet) + (6S)-5,6,7,8-tetrahydrofolate + H(+). In terms of biological role, attaches a formyl group to the free amino group of methionyl-tRNA(fMet). The formyl group appears to play a dual role in the initiator identity of N-formylmethionyl-tRNA by promoting its recognition by IF2 and preventing the misappropriation of this tRNA by the elongation apparatus. In Shewanella oneidensis (strain ATCC 700550 / JCM 31522 / CIP 106686 / LMG 19005 / NCIMB 14063 / MR-1), this protein is Methionyl-tRNA formyltransferase.